A 68-amino-acid polypeptide reads, in one-letter code: Large ribosomal subunit protein uL29 (68 aa).

The protein belongs to the universal ribosomal protein uL29 family.

In Streptococcus suis (strain 98HAH33), this protein is Large ribosomal subunit protein uL29.